Reading from the N-terminus, the 189-residue chain is MSAIVPEIRSADLLRYTVIGSRRPSVYFWAVALTGGGLGFTLAGLSSYLHRNLLPFSDPASLVFIPQGIAMLFYGVLGSLAGLYQWLSLYWNLGGGYNEFDRRTQKITLVRQGFPGKNREVRLEYDFADVQSLRVELREGLNPRRAIYLRVKGRGDIPLTGVGQPPPLTEIENQAAEIARFLNVSLEGI.

The next 2 helical transmembrane spans lie at 25 to 45 (SVYF…LAGL) and 62 to 82 (LVFI…SLAG).

The protein belongs to the Ycf4 family.

It is found in the cellular thylakoid membrane. In terms of biological role, seems to be required for the assembly of the photosystem I complex. The sequence is that of Photosystem I assembly protein Ycf4 from Synechococcus sp. (strain JA-2-3B'a(2-13)) (Cyanobacteria bacterium Yellowstone B-Prime).